Consider the following 1088-residue polypeptide: PAN2-PAN3 deadenylation complex catalytic subunit pan2 (1088 aa).

WD repeat units follow at residues Val-16–Phe-56, His-136–Lys-175, Ala-178–Pro-224, and Pro-270–Asp-309. Positions Asp-309–Ile-443 are linker. The 372-residue stretch at Ile-443–Leu-814 folds into the USP domain. One can recognise an Exonuclease domain in the interval Val-860–Tyr-1033. The a divalent metal cation site is built by Asp-863, Glu-865, Asp-972, and Asp-1025.

It belongs to the peptidase C19 family. PAN2 subfamily. Forms a heterotrimer with an asymmetric homodimer of the regulatory subunit ppk26/pan3 to form the poly(A)-nuclease (PAN) deadenylation complex. A divalent metal cation is required as a cofactor.

The protein localises to the cytoplasm. It catalyses the reaction Exonucleolytic cleavage of poly(A) to 5'-AMP.. Its activity is regulated as follows. Positively regulated by the regulatory subunit ppk26/pan3. Its function is as follows. Catalytic subunit of the poly(A)-nuclease (PAN) deadenylation complex, one of two cytoplasmic mRNA deadenylases involved in mRNA turnover. PAN specifically shortens poly(A) tails of RNA and the activity is stimulated by poly(A)-binding protein pab1. PAN deadenylation is followed by rapid degradation of the shortened mRNA tails by the CCR4-NOT complex. Deadenylated mRNAs are then degraded by two alternative mechanisms, namely exosome-mediated 3'-5' exonucleolytic degradation, or deadenylation-dependent mRNA decaping and subsequent 5'-3' exonucleolytic degradation by xrn1. May also be involved in post-transcriptional maturation of mRNA poly(A) tails. The sequence is that of PAN2-PAN3 deadenylation complex catalytic subunit pan2 from Schizosaccharomyces pombe (strain 972 / ATCC 24843) (Fission yeast).